We begin with the raw amino-acid sequence, 39 residues long: Conotoxin Cl14.5 (39 aa).

A propeptide spanning residues 1–16 (PVNEAGVERLFRALVG) is cleaved from the precursor. Proline 38 carries the proline amide modification.

In terms of processing, contains 2 disulfide bonds. Expressed by the venom duct.

It localises to the secreted. The protein is Conotoxin Cl14.5 of Californiconus californicus (California cone).